The following is a 1788-amino-acid chain: U3 small nucleolar RNA-associated protein 10 (1788 aa).

One copy of the HEAT 1 repeat lies at Leu-585 to Thr-622. A disordered region spans residues Pro-884–Asp-905. HEAT repeat units lie at residues Ala-926–Ser-962, Gln-1049–His-1086, Leu-1257–Ile-1294, Glu-1301–Lys-1339, Glu-1703–Glu-1740, and Gln-1744–Glu-1781.

The protein belongs to the HEATR1/UTP10 family. Component of the ribosomal small subunit (SSU) processome.

The protein resides in the nucleus. It localises to the nucleolus. Its function is as follows. Involved in nucleolar processing of pre-18S ribosomal RNA. Involved in ribosome biosynthesis. This chain is U3 small nucleolar RNA-associated protein 10 (rbg-5), found in Neurospora crassa (strain ATCC 24698 / 74-OR23-1A / CBS 708.71 / DSM 1257 / FGSC 987).